A 483-amino-acid polypeptide reads, in one-letter code: Cysteine--tRNA ligase (483 aa).

Cys-29 is a binding site for Zn(2+). Residues 31–41 (PTVYGHAHLGH) carry the 'HIGH' region motif. Zn(2+) contacts are provided by Cys-221, His-246, and Glu-250. A 'KMSKS' region motif is present at residues 278 to 282 (KMGKS). ATP is bound at residue Lys-281.

This sequence belongs to the class-I aminoacyl-tRNA synthetase family. Monomer. The cofactor is Zn(2+).

Its subcellular location is the cytoplasm. It carries out the reaction tRNA(Cys) + L-cysteine + ATP = L-cysteinyl-tRNA(Cys) + AMP + diphosphate. This chain is Cysteine--tRNA ligase, found in Chlorobium luteolum (strain DSM 273 / BCRC 81028 / 2530) (Pelodictyon luteolum).